Reading from the N-terminus, the 100-residue chain is Urease subunit gamma (100 aa).

This sequence belongs to the urease gamma subunit family. As to quaternary structure, heterotrimer of UreA (gamma), UreB (beta) and UreC (alpha) subunits. Three heterotrimers associate to form the active enzyme.

The protein resides in the cytoplasm. The enzyme catalyses urea + 2 H2O + H(+) = hydrogencarbonate + 2 NH4(+). It functions in the pathway nitrogen metabolism; urea degradation; CO(2) and NH(3) from urea (urease route): step 1/1. The polypeptide is Urease subunit gamma (Prochlorococcus marinus (strain MIT 9312)).